The following is a 445-amino-acid chain: Homogentisate 1,2-dioxygenase (445 aa).

An N6-acetyllysine modification is found at Lys-98. The Fe cation site is built by His-335, Glu-341, and His-371. At Lys-414 the chain carries N6-succinyllysine.

It belongs to the homogentisate dioxygenase family. Homohexamer arranged as a dimer of trimers. Fe cation serves as cofactor.

It carries out the reaction homogentisate + O2 = 4-maleylacetoacetate + H(+). The protein operates within amino-acid degradation; L-phenylalanine degradation; acetoacetate and fumarate from L-phenylalanine: step 4/6. Functionally, catalyzes the conversion of homogentisate to maleylacetoacetate. This is Homogentisate 1,2-dioxygenase (Hgd) from Mus musculus (Mouse).